The primary structure comprises 219 residues: Putative mediator of RNA polymerase II transcription subunit 10 (219 aa).

Low complexity predominate over residues 1–39; sequence MEQQQPQQQNDGQQQQQQQQQHQQQQQQQQQQQQQQQQS. 2 disordered regions span residues 1-42 and 177-219; these read MEQQ…SEQE and KETQ…INNN. Coiled coils occupy residues 13-74 and 166-219; these read QQQQ…VVEE and EYAE…INNN. A compositionally biased stretch (basic and acidic residues) spans 177–192; it reads KETQEQQNDDQIKVDD. The span at 194 to 219 shows a compositional bias: low complexity; it reads NNNNNNNNNNNYNNNNNNNNNNINNN.

This sequence belongs to the Mediator complex subunit 10 family. Component of the Mediator complex.

The protein resides in the nucleus. Its function is as follows. Component of the Mediator complex, a coactivator involved in the regulated transcription of nearly all RNA polymerase II-dependent genes. Mediator functions as a bridge to convey information from gene-specific regulatory proteins to the basal RNA polymerase II transcription machinery. Mediator is recruited to promoters by direct interactions with regulatory proteins and serves as a scaffold for the assembly of a functional preinitiation complex with RNA polymerase II and the general transcription factors. The protein is Putative mediator of RNA polymerase II transcription subunit 10 (med10) of Dictyostelium discoideum (Social amoeba).